The chain runs to 269 residues: tRNA uridine(34) hydroxylase (269 aa).

In terms of domain architecture, Rhodanese spans Gln-122 to Asn-216. The Cysteine persulfide intermediate role is filled by Cys-176.

Belongs to the TrhO family.

The enzyme catalyses uridine(34) in tRNA + AH2 + O2 = 5-hydroxyuridine(34) in tRNA + A + H2O. Functionally, catalyzes oxygen-dependent 5-hydroxyuridine (ho5U) modification at position 34 in tRNAs. This Synechococcus elongatus (strain ATCC 33912 / PCC 7942 / FACHB-805) (Anacystis nidulans R2) protein is tRNA uridine(34) hydroxylase.